Here is a 165-residue protein sequence, read N- to C-terminus: NADPH-dependent 7-cyano-7-deazaguanine reductase (165 aa).

The active-site Thioimide intermediate is the C56. Catalysis depends on D63, which acts as the Proton donor. Residues 78-80 (VES) and 97-98 (HE) each bind substrate. Positions 163 and 165 each coordinate Mg(2+).

The protein belongs to the GTP cyclohydrolase I family. QueF type 1 subfamily. As to quaternary structure, forms an asymmetric tunnel-fold homodecamer of two head-to-head facing pentamers, harboring 10 active sites at the intersubunit interfaces. Requires Does not require a metal cofactor. as cofactor.

The protein localises to the cytoplasm. The catalysed reaction is 7-aminomethyl-7-carbaguanine + 2 NADP(+) = 7-cyano-7-deazaguanine + 2 NADPH + 3 H(+). It participates in tRNA modification; tRNA-queuosine biosynthesis. Its activity is regulated as follows. Activity is strongly inhibited by Cu(2+) and Fe(3+). Functionally, catalyzes the NADPH-dependent reduction of 7-cyano-7-deazaguanine (preQ0) to 7-aminomethyl-7-deazaguanine (preQ1), a late step in the queuosine pathway. This chain is NADPH-dependent 7-cyano-7-deazaguanine reductase (queF), found in Bacillus subtilis (strain 168).